Reading from the N-terminus, the 174-residue chain is Shikimate kinase (174 aa).

15–20 (GTGKST) contacts ATP. Ser19 contributes to the Mg(2+) binding site. 3 residues coordinate substrate: Asp37, Arg61, and Gly82. Arg120 is a binding site for ATP. Arg138 contributes to the substrate binding site.

It belongs to the shikimate kinase family. In terms of assembly, monomer. It depends on Mg(2+) as a cofactor.

It is found in the cytoplasm. The enzyme catalyses shikimate + ATP = 3-phosphoshikimate + ADP + H(+). It functions in the pathway metabolic intermediate biosynthesis; chorismate biosynthesis; chorismate from D-erythrose 4-phosphate and phosphoenolpyruvate: step 5/7. In terms of biological role, catalyzes the specific phosphorylation of the 3-hydroxyl group of shikimic acid using ATP as a cosubstrate. The sequence is that of Shikimate kinase from Staphylococcus aureus (strain MSSA476).